The sequence spans 143 residues: Histone H2AX (143 aa).

The disordered stretch occupies residues 1–22 (MSGRGKTGGKARAKAKSRSSRA). The residue at position 2 (S2) is an N-acetylserine. Phosphoserine is present on S2. Residues K6 and K10 each carry the N6-acetyllysine modification. Over residues 7-19 (TGGKARAKAKSRS) the composition is skewed to basic residues. K10 is subject to N6-lactoyllysine; alternate. Glycyl lysine isopeptide (Lys-Gly) (interchain with G-Cter in ubiquitin) cross-links involve residues K14 and K16. K37 carries the post-translational modification N6-acetyllysine; by CREBBP and EP300. K120 participates in a covalent cross-link: Glycyl lysine isopeptide (Lys-Gly) (interchain with G-Cter in ubiquitin). S121 and S122 each carry phosphoserine. A disordered region spans residues 121-143 (SSATVGPKAPAVGKKASQASQEY). Residues K128 and K135 each participate in a glycyl lysine isopeptide (Lys-Gly) (interchain with G-Cter in SUMO2) cross-link. S137 carries the phosphoserine modification. At S140 the chain carries Phosphoserine; by ATM, ATR and PRKDC. A [ST]-Q motif motif is present at residues 140–141 (SQ). Y143 is modified (phosphotyrosine; by WSTF).

This sequence belongs to the histone H2A family. The nucleosome is a histone octamer containing two molecules each of H2A, H2B, H3 and H4 assembled in one H3-H4 heterotetramer and two H2A-H2B heterodimers. The octamer wraps approximately 147 bp of DNA. Interacts with numerous proteins required for DNA damage signaling and repair when phosphorylated on Ser-140. These include MDC1, BRCA1 and the MRN complex, composed of MRE11, RAD50, and NBN. Interaction with the MRN complex is mediated at least in part by NBN. Also interacts with DHX9/NDHII when phosphorylated on Ser-140 and MCPH1 when phosphorylated at Ser-140 or Tyr-143. Interacts with ARRB2; the interaction is detected in the nucleus upon OR1D2 stimulation. Interacts with WRAP53/TCAB1. Interacts with TP53BP1. Interacts with HDGFL2. In terms of processing, phosphorylated on Ser-140 (to form gamma-H2AX or H2AX139ph) in response to DNA double strand breaks (DSBs) generated by exogenous genotoxic agents, by stalled replication forks, by meiotic recombination events and during immunoglobulin class switching in lymphocytes. Phosphorylation can extend up to several thousand nucleosomes from the actual site of the DSB and may mark the surrounding chromatin for recruitment of proteins required for DNA damage signaling and repair. Widespread phosphorylation may also serve to amplify the damage signal or aid repair of persistent lesions. Phosphorylation of Ser-140 (H2AX139ph) in response to ionizing radiation is mediated by both ATM and PRKDC while defects in DNA replication induce Ser-140 phosphorylation (H2AX139ph) subsequent to activation of ATR and PRKDC. Dephosphorylation of Ser-140 by PP2A is required for DNA DSB repair. In meiosis, Ser-140 phosphorylation (H2AX139ph) first occurs at synaptonemal complexes during leptotene and is an ATM-dependent response to the formation of programmed DSBs by SPO11. Ser-140 phosphorylation (H2AX139ph) subsequently occurs at unsynapsed regions of both autosomes and the XY bivalent during zygotene and is ATR- and BRCA1-dependent. Ser-140 phosphorylation (H2AX139ph) may also be required for transcriptional repression of unsynapsed chromatin and meiotic sex chromosome inactivation (MSCI), whereby the X and Y chromosomes condense in pachytene to form the heterochromatic XY-body. During immunoglobulin class switch recombination in lymphocytes, Ser-140 phosphorylation (H2AX139ph) at sites of DNA-recombination requires the activation-induced cytidine deaminase AICDA. Phosphorylation at Tyr-143 (H2AXY142ph) by BAZ1B/WSTF determines the relative recruitment of either DNA repair or pro-apoptotic factors. Phosphorylation at Tyr-143 (H2AXY142ph) favors the recruitment of APBB1/FE65 and pro-apoptosis factors such as MAPK8/JNK1, triggering apoptosis. In contrast, dephosphorylation of Tyr-143 by EYA proteins (EYA1, EYA2, EYA3 or EYA4) favors the recruitment of MDC1-containing DNA repair complexes to the tail of phosphorylated Ser-140 (H2AX139ph). Phosphorylated by VRK1. Monoubiquitination of Lys-120 (H2AXK119ub) by RING1 and RNF2/RING2 complex gives a specific tag for epigenetic transcriptional repression. Following DNA double-strand breaks (DSBs), it is ubiquitinated through 'Lys-63' linkage of ubiquitin moieties by the E2 ligase UBE2N and the E3 ligases RNF8 and RNF168, leading to the recruitment of repair proteins to sites of DNA damage. Ubiquitination at Lys-14 and Lys-16 (H2AK13Ub and H2AK15Ub, respectively) in response to DNA damage is initiated by RNF168 that mediates monoubiquitination at these 2 sites, and 'Lys-63'-linked ubiquitin are then conjugated to monoubiquitin; RNF8 is able to extend 'Lys-63'-linked ubiquitin chains in vitro. H2AK119Ub and ionizing radiation-induced 'Lys-63'-linked ubiquitination (H2AK13Ub and H2AK15Ub) are distinct events. Post-translationally, acetylation at Lys-6 (H2AXK5ac) by KAT5 component of the NuA4 histone acetyltransferase complex promotes NBN/NBS1 assembly at the sites of DNA damage. Acetylation at Lys-37 increases in S and G2 phases. This modification has been proposed to be important for DNA double-strand break repair. Most abundant in testis, thymus and spleen.

It localises to the nucleus. It is found in the chromosome. Variant histone H2A which replaces conventional H2A in a subset of nucleosomes. Nucleosomes wrap and compact DNA into chromatin, limiting DNA accessibility to the cellular machineries which require DNA as a template. Histones thereby play a central role in transcription regulation, DNA repair, DNA replication and chromosomal stability. DNA accessibility is regulated via a complex set of post-translational modifications of histones, also called histone code, and nucleosome remodeling. Required for checkpoint-mediated arrest of cell cycle progression in response to low doses of ionizing radiation and for efficient repair of DNA double strand breaks (DSBs) specifically when modified by C-terminal phosphorylation. In Mus musculus (Mouse), this protein is Histone H2AX.